The following is a 189-amino-acid chain: Protein GrpE (189 aa).

The tract at residues 1–37 (MSDSSKEKKKKFADMVSRQKGDDQQSDNHKQTDDLNE) is disordered. Over residues 17–33 (SRQKGDDQQSDNHKQTD) the composition is skewed to basic and acidic residues.

The protein belongs to the GrpE family. As to quaternary structure, homodimer.

The protein localises to the cytoplasm. Participates actively in the response to hyperosmotic and heat shock by preventing the aggregation of stress-denatured proteins, in association with DnaK and GrpE. It is the nucleotide exchange factor for DnaK and may function as a thermosensor. Unfolded proteins bind initially to DnaJ; upon interaction with the DnaJ-bound protein, DnaK hydrolyzes its bound ATP, resulting in the formation of a stable complex. GrpE releases ADP from DnaK; ATP binding to DnaK triggers the release of the substrate protein, thus completing the reaction cycle. Several rounds of ATP-dependent interactions between DnaJ, DnaK and GrpE are required for fully efficient folding. In Wolbachia sp. subsp. Drosophila simulans (strain wRi), this protein is Protein GrpE.